Consider the following 493-residue polypeptide: Probable cytosol aminopeptidase (493 aa).

The Mn(2+) site is built by lysine 256 and aspartate 261. Lysine 268 is an active-site residue. Residues aspartate 279, aspartate 338, and glutamate 340 each coordinate Mn(2+). Arginine 342 is an active-site residue.

Belongs to the peptidase M17 family. Requires Mn(2+) as cofactor.

The protein resides in the cytoplasm. It carries out the reaction Release of an N-terminal amino acid, Xaa-|-Yaa-, in which Xaa is preferably Leu, but may be other amino acids including Pro although not Arg or Lys, and Yaa may be Pro. Amino acid amides and methyl esters are also readily hydrolyzed, but rates on arylamides are exceedingly low.. It catalyses the reaction Release of an N-terminal amino acid, preferentially leucine, but not glutamic or aspartic acids.. Functionally, presumably involved in the processing and regular turnover of intracellular proteins. Catalyzes the removal of unsubstituted N-terminal amino acids from various peptides. This is Probable cytosol aminopeptidase from Phytoplasma australiense.